The primary structure comprises 411 residues: Arginine biosynthesis bifunctional protein ArgJ (411 aa).

Residues Thr160, Lys186, Thr197, Glu283, Asn406, and Thr411 each contribute to the substrate site. The Nucleophile role is filled by Thr197.

Belongs to the ArgJ family. In terms of assembly, heterotetramer of two alpha and two beta chains.

The protein localises to the cytoplasm. It carries out the reaction N(2)-acetyl-L-ornithine + L-glutamate = N-acetyl-L-glutamate + L-ornithine. The enzyme catalyses L-glutamate + acetyl-CoA = N-acetyl-L-glutamate + CoA + H(+). It functions in the pathway amino-acid biosynthesis; L-arginine biosynthesis; L-ornithine and N-acetyl-L-glutamate from L-glutamate and N(2)-acetyl-L-ornithine (cyclic): step 1/1. It participates in amino-acid biosynthesis; L-arginine biosynthesis; N(2)-acetyl-L-ornithine from L-glutamate: step 1/4. With respect to regulation, feedback inhibition by L-ornithine. Catalyzes two activities which are involved in the cyclic version of arginine biosynthesis: the synthesis of N-acetylglutamate from glutamate and acetyl-CoA as the acetyl donor, and of ornithine by transacetylation between N(2)-acetylornithine and glutamate. This is Arginine biosynthesis bifunctional protein ArgJ from Halalkalibacterium halodurans (strain ATCC BAA-125 / DSM 18197 / FERM 7344 / JCM 9153 / C-125) (Bacillus halodurans).